The chain runs to 105 residues: Insulin (105 aa).

The signal sequence occupies residues Met1 to Ala24. Intrachain disulfides connect Cys31–Cys91, Cys43–Cys104, and Cys90–Cys95. The propeptide at Glu57–Gln82 is c peptide.

This sequence belongs to the insulin family. As to quaternary structure, heterodimer of a B chain and an A chain linked by two disulfide bonds.

The protein localises to the secreted. Functionally, insulin decreases blood glucose concentration. It increases cell permeability to monosaccharides, amino acids and fatty acids. It accelerates glycolysis, the pentose phosphate cycle, and glycogen synthesis in liver. This is Insulin (INS) from Bos taurus (Bovine).